Consider the following 201-residue polypeptide: Small ribosomal subunit protein uS4 (201 aa).

The region spanning 103–167 (RRLQTIVTKK…SKIPQVLEKT (65 aa)) is the S4 RNA-binding domain. Residues 163–201 (VLEKTKSEAPAEETVEAPAEETVEAPAEEKKEESPSTES) form a disordered region. A compositionally biased stretch (acidic residues) spans 172-185 (PAEETVEAPAEETV). The segment covering 189-201 (AEEKKEESPSTES) has biased composition (basic and acidic residues).

Belongs to the universal ribosomal protein uS4 family. Part of the 30S ribosomal subunit. Contacts protein S5. The interaction surface between S4 and S5 is involved in control of translational fidelity.

One of the primary rRNA binding proteins, it binds directly to 16S rRNA where it nucleates assembly of the body of the 30S subunit. Functionally, with S5 and S12 plays an important role in translational accuracy. The chain is Small ribosomal subunit protein uS4 from Nitrosopumilus maritimus (strain SCM1).